The sequence spans 173 residues: NADH-ubiquinone oxidoreductase chain 6 (173 aa).

The next 5 helical transmembrane spans lie at 1 to 21 (MTYI…AVAS), 27 to 47 (FAAL…VGYG), 53 to 73 (LVLF…SAAL), 86 to 106 (SVLG…GWFW), and 139 to 159 (YGGG…FVVL).

It belongs to the complex I subunit 6 family.

The protein resides in the mitochondrion membrane. The catalysed reaction is a ubiquinone + NADH + 5 H(+)(in) = a ubiquinol + NAD(+) + 4 H(+)(out). Its function is as follows. Core subunit of the mitochondrial membrane respiratory chain NADH dehydrogenase (Complex I) that is believed to belong to the minimal assembly required for catalysis. Complex I functions in the transfer of electrons from NADH to the respiratory chain. The immediate electron acceptor for the enzyme is believed to be ubiquinone. This is NADH-ubiquinone oxidoreductase chain 6 (MT-ND6) from Salmo salar (Atlantic salmon).